The chain runs to 506 residues: Probable E3 ubiquitin-protein ligase ARI14 (506 aa).

A TRIAD supradomain region spans residues 79–308; it reads PDSSSEISLE…VDSGFCIKTE (230 aa). The segment at 83 to 140 adopts an RING-type 1 zinc-finger fold; sequence SEISLETDVYEFDGDNDLISMPFCSHKFDSKYWREYLEKNFYYVEKIQTTISCPDQDC. 20 residues coordinate Zn(2+): Cys-106, His-108, Cys-135, Cys-140, Cys-180, Cys-185, Cys-207, Cys-209, Cys-214, Cys-217, His-222, Cys-227, Cys-258, Cys-261, Cys-277, Cys-279, Cys-284, Cys-287, His-294, and Cys-304. The IBR-type zinc-finger motif lies at 158–227; it reads EMYERYIWRS…RLESHRPVSC (70 aa). The segment at 258–287 adopts an RING-type 2; atypical zinc-finger fold; it reads CPHCLCSLESDTKMPQFLTCVCRLRFCSRC. The segment at 462–492 adopts a RanBP2-type zinc-finger fold; the sequence is GTGPFWYCDRCTYANTWEDNECEMCYDDSAS.

This sequence belongs to the RBR family. Ariadne subfamily. Requires Zn(2+) as cofactor. As to expression, mostly expressed in closed flowers and, to a lower extent, in pollen.

It catalyses the reaction [E2 ubiquitin-conjugating enzyme]-S-ubiquitinyl-L-cysteine + [acceptor protein]-L-lysine = [E2 ubiquitin-conjugating enzyme]-L-cysteine + [acceptor protein]-N(6)-ubiquitinyl-L-lysine.. It functions in the pathway protein modification; protein ubiquitination. Functionally, might act as an E3 ubiquitin-protein ligase, or as part of E3 complex, which accepts ubiquitin from specific E2 ubiquitin-conjugating enzymes and then transfers it to substrates. Negatively regulates male gametophyte formation and double fertilization. This is Probable E3 ubiquitin-protein ligase ARI14 from Arabidopsis thaliana (Mouse-ear cress).